Here is a 1105-residue protein sequence, read N- to C-terminus: MAATASAGVPATVSEKQEFYQLLKNLINPSCMVRRQAEEIYENIPGLCKTTFLLDAVRNRRAGYEVRQMAAALLRRLLSSGFEEVYPNLPADVQRDVKIELILAVKLETHASMRKKLCDIFAVLARNLIDEDGTNHWPEGLKFLIDSIYSKNVVLWEVALHVFWHFPGIFGTQERHDLDIIKRLLDQCIQDQEHPAIRTLSARAAAAFVLANENNIALFKDFADLLPGILQAVNDSCYQDDDSVLESLVEIADTVPKYLGPYLEDTLQLSLKLCGDSRLSNLQRQLALEVIVTLSETATPMLKKHTNIIAQAVPHILAMMVDLQDDEDWVNADEMEEDDFDSNAVAAESALDRLACGLGGKVVLPMTKEHIMQMLQSPDWKYRHAGLMALSAIGEGCHQQMESILDETVNSVLLFLQDPHPRVRAAACTTLGQMATDFAPNFQKKFHETVIAALLRTMENQGNQRVQSHAASALIIFIEDCPKSLLVLYVDSMVKNLHSVLVIKLQELIRNGTKLALEQLVTTIASVADTIEEKFVPYYDIFMPSLKHIVELAVQKELKLLRGKTIECISHIGLAVGKEKFMQDASNVMQLLLKTQSDLNNMEDDDPQTSYMVSAWARMCKILGKDFQQYLPLVIEPLIKTASAKPDVALLDTQDVENMSDDDGWQFVNLGDQQSFGIKTSGLEAKATACQMLVYYAKELREGFVEYTEQVVKLMVPLLKFYFHDNVRVAAAESMPFLLECARIRGPEYLAQMWQFICDPLIKAIGTEPDTDVLSEIMNSFAKSIEVMGDGCLNDEHLEELGGILKAKLEGHFKNQELRQVKRQEENYDQQVEMSLQDEDECDVYILTKVSDILHSLFSTYKEKILPWFEQLLPLIVNLICSSRPWPDRQWGLCIFDDIIEHCSPTSFKYVEYFRWPMLLNMRDNNPEVRQAAAYGLGVMAQFGGDDYRSLCSEAVPLLVKVIKCANSKTKKNVIATENCISAIGKILKFKPNCVNVDEVLPHWLSWLPLHEDKEEAIQTLSFLCDLIESNHPVVIGPNNSNLPKIISIIAEGKINETINYEDPCAKRLANVVRQVQTSEDLWLECVSQLDDEQQEALQELLNFA.

N-acetylalanine is present on alanine 2. HEAT repeat units lie at residues 219–257 (FKDF…TVPK), 361–399 (KVVL…GCHQ), 402–440 (ESIL…DFAP), and 444–483 (KKFH…DCPK). The ran-GTP binding stretch occupies residues 333–383 (DEMEEDDFDSNAVAAESALDRLACGLGGKVVLPMTKEHIMQMLQSPDWKYR). Positions 806 to 842 (KAKLEGHFKNQELRQVKRQEENYDQQVEMSLQDEDEC) form a coiled coil. HEAT repeat units follow at residues 866–905 (LPWF…HCSP), 908–946 (FKYV…FGGD), and 949–987 (RSLC…IGKI).

This sequence belongs to the importin beta family.

It is found in the cytoplasm. The protein localises to the nucleus. In terms of biological role, may function in nuclear protein import as nuclear transport receptor. This Homo sapiens (Human) protein is Ran-binding protein 6 (RANBP6).